The sequence spans 168 residues: NAD(P)H-quinone oxidoreductase subunit J, chloroplastic (168 aa).

The protein belongs to the complex I 30 kDa subunit family. As to quaternary structure, NDH is composed of at least 16 different subunits, 5 of which are encoded in the nucleus.

The protein localises to the plastid. It localises to the chloroplast thylakoid membrane. The enzyme catalyses a plastoquinone + NADH + (n+1) H(+)(in) = a plastoquinol + NAD(+) + n H(+)(out). The catalysed reaction is a plastoquinone + NADPH + (n+1) H(+)(in) = a plastoquinol + NADP(+) + n H(+)(out). NDH shuttles electrons from NAD(P)H:plastoquinone, via FMN and iron-sulfur (Fe-S) centers, to quinones in the photosynthetic chain and possibly in a chloroplast respiratory chain. The immediate electron acceptor for the enzyme in this species is believed to be plastoquinone. Couples the redox reaction to proton translocation, and thus conserves the redox energy in a proton gradient. The sequence is that of NAD(P)H-quinone oxidoreductase subunit J, chloroplastic from Chaetosphaeridium globosum (Charophycean green alga).